The following is a 240-amino-acid chain: FMN-dependent NADH:quinone oxidoreductase 2 (240 aa).

Residues S10 and 23 to 25 (SIS) contribute to the FMN site.

The protein belongs to the azoreductase type 1 family. As to quaternary structure, homodimer. Requires FMN as cofactor.

The enzyme catalyses 2 a quinone + NADH + H(+) = 2 a 1,4-benzosemiquinone + NAD(+). It catalyses the reaction N,N-dimethyl-1,4-phenylenediamine + anthranilate + 2 NAD(+) = 2-(4-dimethylaminophenyl)diazenylbenzoate + 2 NADH + 2 H(+). In terms of biological role, quinone reductase that provides resistance to thiol-specific stress caused by electrophilic quinones. Functionally, also exhibits azoreductase activity. Catalyzes the reductive cleavage of the azo bond in aromatic azo compounds to the corresponding amines. This chain is FMN-dependent NADH:quinone oxidoreductase 2, found in Idiomarina loihiensis (strain ATCC BAA-735 / DSM 15497 / L2-TR).